A 515-amino-acid chain; its full sequence is Hyccin (515 aa).

A compositionally biased stretch (low complexity) spans 358–378 (STSQSALSNSSNTSSKNLLGK). Disordered stretches follow at residues 358–410 (STSQ…TQRA) and 491–515 (TDLP…LSTD). Residues 389 to 403 (AGREKEGETCREHLS) show a composition bias toward basic and acidic residues. Residues 498-515 (KQPNQQRPPSISITLSTD) are compositionally biased toward polar residues.

It belongs to the Hyccin family. As to quaternary structure, component of a phosphatidylinositol 4-kinase (PI4K) complex.

Its subcellular location is the cytoplasm. The protein localises to the cytosol. It localises to the cell membrane. Its function is as follows. Component of a complex required to localize phosphatidylinositol 4-kinase (PI4K) to the plasma membrane. The complex acts as a regulator of phosphatidylinositol 4-phosphate (PtdIns(4)P) synthesis. The polypeptide is Hyccin (HYCC1) (Gallus gallus (Chicken)).